The sequence spans 986 residues: Ephrin type-A receptor 4 (986 aa).

The signal sequence occupies residues 1–19 (MAGIFYFALFSCLFGICDA). Residues 20–547 (VTGSRVYPAN…RIIGDGANST (528 aa)) are Extracellular-facing. Residues 30–209 (EVTLLDSRSV…FYKKCPLTVR (180 aa)) form the Eph LBD domain. 3 N-linked (GlcNAc...) asparagine glycosylation sites follow: asparagine 235, asparagine 340, and asparagine 408. Fibronectin type-III domains follow at residues 328-439 (PPSA…TNQA) and 440-537 (APSS…TVPS). Asparagine 545 carries N-linked (GlcNAc...) asparagine glycosylation. The helical transmembrane segment at 548-569 (VLLVSVSGSVVLVVILIAAFVI) threads the bilayer. Topologically, residues 570–986 (SRRRSKYSKA…QQMHGRMVPV (417 aa)) are cytoplasmic. A phosphotyrosine; by autocatalysis mark is found at tyrosine 596 and tyrosine 602. The Protein kinase domain maps to 621-882 (IKIEKVIGVG…QIVNMLDKLI (262 aa)). ATP contacts are provided by residues 627 to 635 (IGVGEFGEV) and lysine 653. Aspartate 746 (proton acceptor) is an active-site residue. Tyrosine 779 and tyrosine 928 each carry phosphotyrosine; by autocatalysis. The region spanning 911–975 (SAVVSVGDWL…LSSVQAMRTQ (65 aa)) is the SAM domain. The PDZ-binding signature appears at 984–986 (VPV).

Belongs to the protein kinase superfamily. Tyr protein kinase family. Ephrin receptor subfamily. As to quaternary structure, heterotetramer upon binding of the ligand. The heterotetramer is composed of an ephrin dimer and a receptor dimer. Oligomerization is probably required to induce biological responses. Interacts (phosphorylated at position Tyr-602) with FYN. Interacts with CDK5, CDK5R1 and NGEF; upon activation by EFNA1 induces NGEF phosphorylation by the kinase CDK5. Interacts with CHN1; effector of EPHA4 in axon guidance linking EPHA4 activation to RAC1 regulation. Interacts (via PDZ motif) with SIPA1L1 (via PDZ domain); controls neuronal morphology through regulation of the RAP1 (RAP1A or RAP1B) and RAP2 (RAP2A, RAP2B or RAP2C) GTPases. Forms a ternary complex composed of ADAM10, CADH1 and EPHA4; within the complex, CADH1 is cleaved by ADAM10 which disrupts adherens junctions. Ubiquitous.

It is found in the cell membrane. The protein localises to the cell projection. The protein resides in the axon. It localises to the dendrite. Its subcellular location is the postsynaptic density membrane. It is found in the early endosome. The protein localises to the cell junction. The protein resides in the adherens junction. The enzyme catalyses L-tyrosyl-[protein] + ATP = O-phospho-L-tyrosyl-[protein] + ADP + H(+). In terms of biological role, receptor tyrosine kinase which binds membrane-bound ephrin family ligands residing on adjacent cells, leading to contact-dependent bidirectional signaling into neighboring cells. The signaling pathway downstream of the receptor is referred to as forward signaling while the signaling pathway downstream of the ephrin ligand is referred to as reverse signaling. Highly promiscuous, it has the unique property among Eph receptors to bind and to be physiologically activated by both GPI-anchored ephrin-A and transmembrane ephrin-B ligands including EFNA1 and EFNB3. Upon activation by ephrin ligands, modulates cell morphology and integrin-dependent cell adhesion through regulation of the Rac, Rap and Rho GTPases activity. Plays an important role in the development of the nervous system controlling different steps of axonal guidance including the establishment of the corticospinal projections. May also control the segregation of motor and sensory axons during neuromuscular circuit development. In addition to its role in axonal guidance plays a role in synaptic plasticity. Activated by EFNA1 phosphorylates CDK5 at 'Tyr-15' which in turn phosphorylates NGEF regulating RHOA and dendritic spine morphogenesis. In the nervous system, also plays a role in repair after injury preventing axonal regeneration and in angiogenesis playing a role in central nervous system vascular formation. Additionally, its promiscuity makes it available to participate in a variety of cell-cell signaling regulating for instance the development of the thymic epithelium. During development of the cochlear organ of Corti, regulates pillar cell separation by forming a ternary complex with ADAM10 and CADH1 which facilitates the cleavage of CADH1 by ADAM10 and disruption of adherens junctions. Phosphorylates CAPRIN1, promoting CAPRIN1-dependent formation of a membraneless compartment. The sequence is that of Ephrin type-A receptor 4 (EPHA4) from Homo sapiens (Human).